A 320-amino-acid chain; its full sequence is tRNA dimethylallyltransferase (320 aa).

5 to 12 is a binding site for ATP; that stretch reads GPTAVGKS. 7 to 12 contacts substrate; sequence TAVGKS. An interaction with substrate tRNA region spans residues 30–33; sequence DSMQ.

This sequence belongs to the IPP transferase family. Monomer. Mg(2+) serves as cofactor.

It catalyses the reaction adenosine(37) in tRNA + dimethylallyl diphosphate = N(6)-dimethylallyladenosine(37) in tRNA + diphosphate. Catalyzes the transfer of a dimethylallyl group onto the adenine at position 37 in tRNAs that read codons beginning with uridine, leading to the formation of N6-(dimethylallyl)adenosine (i(6)A). This chain is tRNA dimethylallyltransferase, found in Heliobacterium modesticaldum (strain ATCC 51547 / Ice1).